The sequence spans 398 residues: Enoyl-[acyl-carrier-protein] reductase [NADH] (398 aa).

NAD(+)-binding positions include 48–53, 74–75, 111–112, and 139–140; these read GASTGY, FE, DG, and LA. Residue Y225 participates in substrate binding. Y235 (proton donor) is an active-site residue. Residues K244 and 273 to 275 contribute to the NAD(+) site; that span reads VVT.

The protein belongs to the TER reductase family. In terms of assembly, monomer.

It catalyses the reaction a 2,3-saturated acyl-[ACP] + NAD(+) = a (2E)-enoyl-[ACP] + NADH + H(+). The protein operates within lipid metabolism; fatty acid biosynthesis. Involved in the final reduction of the elongation cycle of fatty acid synthesis (FAS II). Catalyzes the reduction of a carbon-carbon double bond in an enoyl moiety that is covalently linked to an acyl carrier protein (ACP). The protein is Enoyl-[acyl-carrier-protein] reductase [NADH] of Variovorax paradoxus (strain S110).